We begin with the raw amino-acid sequence, 142 residues long: MVLSANDKTNVKNVFTKIGGHAEEYGAETLERMFTTYPPTKTYFPHFDLHHGSAQIKAHGKKVVGALIEAVNHIDDIAGALSKLSDLHAQKLRVDPVNFKLLGQCFLVVVAIHHPSVLTPEVHASLDKFLCAVGNVLTAKYR.

Residues 2-142 (VLSANDKTNV…VGNVLTAKYR (141 aa)) enclose the Globin domain. Residue His59 coordinates O2. His88 is a heme b binding site.

Belongs to the globin family. Heterotetramer of two alpha chains and two beta chains. As to expression, red blood cells.

Involved in oxygen transport from the lung to the various peripheral tissues. In Accipiter gentilis (Northern goshawk), this protein is Hemoglobin subunit alpha-A (HBAA).